The sequence spans 93 residues: Large ribosomal subunit protein uL23c (93 aa).

Belongs to the universal ribosomal protein uL23 family. In terms of assembly, part of the 50S ribosomal subunit.

It is found in the plastid. Its subcellular location is the chloroplast. In terms of biological role, binds to 23S rRNA. The polypeptide is Large ribosomal subunit protein uL23c (rpl23) (Adiantum capillus-veneris (Maidenhair fern)).